Reading from the N-terminus, the 188-residue chain is UPF0301 protein Mmwyl1_0539 (188 aa).

The protein belongs to the UPF0301 (AlgH) family.

In Marinomonas sp. (strain MWYL1), this protein is UPF0301 protein Mmwyl1_0539.